We begin with the raw amino-acid sequence, 554 residues long: Cytochrome P450 monooxygenase himC (554 aa).

The chain crosses the membrane as a helical span at residues 52-72 (YSVASVAIAGFTALVVSVALY). N-linked (GlcNAc...) asparagine glycans are attached at residues N110, N328, N414, and N425. Position 501 (C501) interacts with heme.

This sequence belongs to the cytochrome P450 family. Heme is required as a cofactor.

It is found in the membrane. It functions in the pathway secondary metabolite biosynthesis. Cytochrome P450 monooxygenase; part of the him gene cluster that mediates the biosynthesis of himeic acid A, a ubiquitin-activating enzyme (E1) inhibitor. First, himA, together with the trans-enoyl reductase himH, catalyzes the formation of apolyketide chain, which is then condensed with leucine by the NRPS activity of himA. Dieckmann cyclization and release from himA gives a tetramic acid intermediate as the product of himA PKS-NRPS. HimG then catalyzes alpha-oxidation of the tetramic acid ring, with a subsequent rearrangement to yield apyrone intermediate. Two terminal methyl groups of polyketide and amide side chains are oxidized to carboxylic acids by himC cytochrome P450 monooxygenase to form himeic acid A. Himeic acid A is further converted to himeic acid B and C during culture growth. No gene responsible for pyrone to pyridone conversion was found in the him gene cluster and himeic acid A is non-enzymatically converted to himeic acid C by the incorporation of an ammonium nitrogen atom in a pH5 buffer, and to himeic acid B at a conversion ratio of 50% during incubation in MeOH for 5 days. This Aspergillus japonicus protein is Cytochrome P450 monooxygenase himC.